Here is a 400-residue protein sequence, read N- to C-terminus: Nicotinate phosphoribosyltransferase (400 aa).

His-220 is subject to Phosphohistidine; by autocatalysis.

This sequence belongs to the NAPRTase family. Transiently phosphorylated on a His residue during the reaction cycle. Phosphorylation strongly increases the affinity for substrates and increases the rate of nicotinate D-ribonucleotide production. Dephosphorylation regenerates the low-affinity form of the enzyme, leading to product release.

The enzyme catalyses nicotinate + 5-phospho-alpha-D-ribose 1-diphosphate + ATP + H2O = nicotinate beta-D-ribonucleotide + ADP + phosphate + diphosphate. It participates in cofactor biosynthesis; NAD(+) biosynthesis; nicotinate D-ribonucleotide from nicotinate: step 1/1. In terms of biological role, catalyzes the synthesis of beta-nicotinate D-ribonucleotide from nicotinate and 5-phospho-D-ribose 1-phosphate at the expense of ATP. This chain is Nicotinate phosphoribosyltransferase, found in Salmonella newport (strain SL254).